The sequence spans 638 residues: Epithelial sodium channel subunit delta (638 aa).

A compositionally biased stretch (basic and acidic residues) spans 1–13 (MAEHRSMDGRMEA). The segment at 1–47 (MAEHRSMDGRMEAATRGGSHLQAAAQTPPRPGPPSAPPPPPKEGHQE) is disordered. Topologically, residues 1-86 (MAEHRSMDGR…CSRGNRLKTT (86 aa)) are cytoplasmic. Residues 28-41 (PPRPGPPSAPPPPP) are compositionally biased toward pro residues. Residues 87–107 (SWGLLSLGALVALCWQLGLLF) traverse the membrane as a helical segment. Topologically, residues 108–530 (ERHWHRPVLM…VPQLLSAMGS (423 aa)) are extracellular. N-linked (GlcNAc...) asparagine glycosylation is found at N166 and N384. A helical membrane pass occupies residues 531-551 (LCSLWFGASVLSLLELLELLL). Topologically, residues 552–638 (DASALTLVLG…GPQPLETLDT (87 aa)) are cytoplasmic. Residues 574-613 (RASPASGASSIKPEASQMPTPAGGTSDDPEPSGPHLPRVM) are disordered.

It belongs to the amiloride-sensitive sodium channel (TC 1.A.6) family. SCNN1D subfamily. In terms of assembly, can form an alternative heterotrimeric epithelial sodium channel (ENaC), composed of a delta (SCNN1D), beta (SCNN1B), and gamma (SCNN1G) subunit, where the delta (SCNN1D) subunit replaces the alpha (SCNN1A) subunit.

Its subcellular location is the apical cell membrane. It catalyses the reaction Na(+)(in) = Na(+)(out). Its activity is regulated as follows. Originally identified and characterized by its inhibition by the diuretic drug amiloride. Potential alternative pore-forming subunit of the epithelial sodium channel (ENaC), capable of replacing the alpha/SCNN1A subunit, creating a more active channel with distinct properties. ENaC functions in epithelial tissues, where it facilitates the electrodiffusion of sodium ions from the extracellular fluid through the apical membrane of cells, with water following osmotically, regulating sodium balance and fluid homeostasis. This subunit could also function independently as a sodium channel or assemble into other tissue-specific heterotrimeric sodium channels. This chain is Epithelial sodium channel subunit delta, found in Pan troglodytes (Chimpanzee).